The chain runs to 298 residues: Aspartate carbamoyltransferase catalytic subunit (298 aa).

Carbamoyl phosphate is bound by residues arginine 53 and threonine 54. Position 81 (lysine 81) interacts with L-aspartate. Carbamoyl phosphate-binding residues include arginine 103, histidine 132, and glutamine 135. Residues arginine 166 and arginine 218 each contribute to the L-aspartate site. Carbamoyl phosphate-binding residues include glycine 259 and proline 260.

The protein belongs to the aspartate/ornithine carbamoyltransferase superfamily. ATCase family. As to quaternary structure, heterododecamer (2C3:3R2) of six catalytic PyrB chains organized as two trimers (C3), and six regulatory PyrI chains organized as three dimers (R2).

The enzyme catalyses carbamoyl phosphate + L-aspartate = N-carbamoyl-L-aspartate + phosphate + H(+). Its pathway is pyrimidine metabolism; UMP biosynthesis via de novo pathway; (S)-dihydroorotate from bicarbonate: step 2/3. Functionally, catalyzes the condensation of carbamoyl phosphate and aspartate to form carbamoyl aspartate and inorganic phosphate, the committed step in the de novo pyrimidine nucleotide biosynthesis pathway. This chain is Aspartate carbamoyltransferase catalytic subunit, found in Anaplasma marginale (strain St. Maries).